Consider the following 467-residue polypeptide: Congo red hypersensitive protein 2 (467 aa).

The first 23 residues, 1-23, serve as a signal peptide directing secretion; it reads MAIVNSWLICLVSIFSFVVRVEA. Asparagine 28 carries N-linked (GlcNAc...) asparagine glycosylation. Cysteine 56 and cysteine 67 are joined by a disulfide. Positions 63–280 constitute a GH16 domain; the sequence is SHDSCMPVPI…WSGGEINWDA (218 aa). N-linked (GlcNAc...) asparagine glycosylation is present at asparagine 96. The active-site Nucleophile is glutamate 166. Glutamate 170 (proton donor) is an active-site residue. Glutamate 170 is a chitin binding site. N-linked (GlcNAc...) asparagine glycosylation is found at asparagine 190, asparagine 196, asparagine 233, and asparagine 237. Tryptophan 257 contacts chitin. The N-linked (GlcNAc...) asparagine glycan is linked to asparagine 261. Position 268 (threonine 268) interacts with chitin. Asparagine 297 and asparagine 310 each carry an N-linked (GlcNAc...) asparagine glycan. The segment at 337-444 is disordered; the sequence is MDSDEGSGLD…SSSTSSMSGN (108 aa). A compositionally biased stretch (low complexity) spans 351–444; the sequence is ATTSSTQKSS…SSSTSSMSGN (94 aa). Residue asparagine 445 is the site of GPI-anchor amidated asparagine attachment. Residues 446–467 constitute a propeptide, removed in mature form; that stretch reads AGANVAANWRLTVLCVILGYVL.

Belongs to the glycosyl hydrolase 16 family. CRH1 subfamily. Post-translationally, the GPI-anchor is attached to the protein in the endoplasmic reticulum and serves to target the protein to the cell surface. There, the glucosamine-inositol phospholipid moiety is cleaved off and the GPI-modified mannoprotein is covalently attached via its lipidless GPI glycan remnant to the 1,6-beta-glucan of the outer cell wall layer.

It is found in the secreted. Its subcellular location is the cell wall. The protein resides in the membrane. The enzyme catalyses Random endo-hydrolysis of N-acetyl-beta-D-glucosaminide (1-&gt;4)-beta-linkages in chitin and chitodextrins.. In terms of biological role, dual chitinase/transglycosylase that plays a role in cell wall architecture. Chitinase and transglycosylase activities are coupled. Required for the polysaccharide cross-linking at the septa and the cell wall. More specifically, transfers chitin to both beta(1-3)- and beta(1-6)glucan in the cell wall. The minimal number of intact hexopyranose units required in the molecule of the acceptor oligosaccharide is two and the effectivity of the acceptor increased with the increasing length of its oligosaccharide chain. The chain is Congo red hypersensitive protein 2 from Saccharomyces cerevisiae (strain ATCC 204508 / S288c) (Baker's yeast).